Reading from the N-terminus, the 128-residue chain is Large ribosomal subunit protein uL24 (128 aa).

Belongs to the universal ribosomal protein uL24 family. As to quaternary structure, part of the 50S ribosomal subunit.

Functionally, one of two assembly initiator proteins, it binds directly to the 5'-end of the 23S rRNA, where it nucleates assembly of the 50S subunit. In terms of biological role, located at the polypeptide exit tunnel on the outside of the subunit. This is Large ribosomal subunit protein uL24 from Pyrobaculum calidifontis (strain DSM 21063 / JCM 11548 / VA1).